The primary structure comprises 145 residues: Transcriptional regulator MraZ (145 aa).

SpoVT-AbrB domains lie at 5–49 and 78–121; these read TYNH…LESE and TYKV…AKEV.

Belongs to the MraZ family. As to quaternary structure, forms oligomers.

The protein localises to the cytoplasm. It is found in the nucleoid. The protein is Transcriptional regulator MraZ of Ureaplasma urealyticum serovar 10 (strain ATCC 33699 / Western).